The following is a 269-amino-acid chain: uncharacterized protein (269 aa).

The next 4 helical transmembrane spans lie at 64–84 (FVYF…LAGV), 125–145 (YGIA…FLSF), 169–189 (FFIS…FLVL), and 230–250 (VFAT…IAIF).

The protein localises to the cell membrane. This is an uncharacterized protein from Mycoplasma genitalium (strain ATCC 33530 / DSM 19775 / NCTC 10195 / G37) (Mycoplasmoides genitalium).